The chain runs to 174 residues: Nascent polypeptide-associated complex subunit alpha (174 aa).

Ser-2 bears the N-acetylserine mark. One can recognise an NAC-A/B domain in the interval 14–78; the sequence is NKNEKKAREL…AKVDNFTQKL (65 aa). The interval 85–137 is disordered; the sequence is AQASGIMPSNEDVATKSPEDIQADMQAAAEGSVNAAAEEDDEEGEVDAGDLNK. Position 93 is a phosphoserine (Ser-93). Over residues 111 to 120 the composition is skewed to low complexity; that stretch reads AAAEGSVNAA. The segment covering 121–132 has biased composition (acidic residues); the sequence is AEEDDEEGEVDA. The UBA domain maps to 135–174; that stretch reads LNKDDIELVVQQTNVSKNQAIKALKAHNGDLVNAIMSLSK.

Belongs to the NAC-alpha family. In terms of assembly, part of the nascent polypeptide-associated complex (NAC), consisting of EGD2 and either EGD1 or BTT1. NAC associates with ribosomes via EGD1 or BTT1, and with the CCR4-NOT complex.

It is found in the cytoplasm. The protein localises to the nucleus. Functionally, component of the nascent polypeptide-associated complex (NAC), a dynamic component of the ribosomal exit tunnel, protecting the emerging polypeptides from interaction with other cytoplasmic proteins to ensure appropriate nascent protein targeting. The NAC complex also promotes mitochondrial protein import by enhancing productive ribosome interactions with the outer mitochondrial membrane and blocks the inappropriate interaction of ribosomes translating non-secretory nascent polypeptides with translocation sites in the membrane of the endoplasmic reticulum. EGD2 may also be involved in transcription regulation. The polypeptide is Nascent polypeptide-associated complex subunit alpha (EGD2) (Saccharomyces cerevisiae (strain YJM789) (Baker's yeast)).